The primary structure comprises 158 residues: GTP-dependent dephospho-CoA kinase (158 aa).

Residues Asp35, Val36, Asp54, Lys56, Glu109, and Asp132 each coordinate GTP.

Belongs to the GTP-dependent DPCK family.

It catalyses the reaction 3'-dephospho-CoA + GTP = GDP + CoA + H(+). It functions in the pathway cofactor biosynthesis; coenzyme A biosynthesis. Its function is as follows. Catalyzes the GTP-dependent phosphorylation of the 3'-hydroxyl group of dephosphocoenzyme A to form coenzyme A (CoA). The chain is GTP-dependent dephospho-CoA kinase from Methanococcus maripaludis (strain C7 / ATCC BAA-1331).